The primary structure comprises 402 residues: Tol-Pal system protein TolB (402 aa).

An N-terminal signal peptide occupies residues 1–17; that stretch reads MKKIVAIFLVFLGSLWA.

This sequence belongs to the TolB family. The Tol-Pal system is composed of five core proteins: the inner membrane proteins TolA, TolQ and TolR, the periplasmic protein TolB and the outer membrane protein Pal. They form a network linking the inner and outer membranes and the peptidoglycan layer.

Its subcellular location is the periplasm. Part of the Tol-Pal system, which plays a role in outer membrane invagination during cell division and is important for maintaining outer membrane integrity. The polypeptide is Tol-Pal system protein TolB (Campylobacter jejuni subsp. jejuni serotype O:2 (strain ATCC 700819 / NCTC 11168)).